The chain runs to 221 residues: MADNGTITVEELKQLLEQWNLVIGFLFLAWIMLLQFAYSNRNRFLYIIKLVFLWLLWPVTLACFVLAAVYRINWVTGGIAIAMACIVGLMWLSYFVASFRLFARTRSMWSFNPETNILLNVPLRGTIVTRPLMESELVIGAVIIRGHLRMAGHSLGRCDIKDLPKEITVATSRTLSYYKLGASQRVGTDSGFAAYNRYRIGNYKLNTDHAGSNDNIALLVQ.

The Virion surface segment spans residues 1–18 (MADNGTITVEELKQLLEQ). N-linked (GlcNAc...) asparagine; by host glycosylation occurs at N4. A helical transmembrane segment spans residues 19–39 (WNLVIGFLFLAWIMLLQFAYS). At 40-49 (NRNRFLYIIK) the chain is on the intravirion side. The helical transmembrane segment at 50 to 70 (LVFLWLLWPVTLACFVLAAVY) threads the bilayer. The Virion surface segment spans residues 71–78 (RINWVTGG). The chain crosses the membrane as a helical span at residues 79-99 (IAIAMACIVGLMWLSYFVASF). Topologically, residues 100 to 221 (RLFARTRSMW…SNDNIALLVQ (122 aa)) are intravirion.

It belongs to the betacoronaviruses M protein family. As to quaternary structure, homomultimer. Interacts with envelope E protein in the budding compartment of the host cell, which is located between endoplasmic reticulum and the Golgi complex. Forms a complex with HE and S proteins. Interacts with nucleocapsid N protein. This interaction probably participates in RNA packaging into the virus. Interacts with the accessory proteins 3a and 7a. Glycosylated at N-terminus.

It is found in the virion membrane. The protein localises to the host Golgi apparatus membrane. Its function is as follows. Component of the viral envelope that plays a central role in virus morphogenesis and assembly via its interactions with other viral proteins. This is Membrane protein from Severe acute respiratory syndrome coronavirus (SARS-CoV).